We begin with the raw amino-acid sequence, 68 residues long: Alpha-conotoxin-like Ca1.2 (68 aa).

The first 21 residues, 1 to 21 (MGMRMMFTVFLLVVLATTVVS), serve as a signal peptide directing secretion. The propeptide occupies 22 to 48 (FTSDRASEGRNAAAKDKASDLVALTVR). 2 disulfide bridges follow: C50–C56 and C51–C64. Residues 52-54 (AIR) form a lacks the Ser-Xaa-Pro motif that is crucial for potent interaction with nAChR region. Sulfotyrosine is present on Y63. C64 carries the post-translational modification Cysteine amide. Residues 65 to 68 (GGIY) constitute a propeptide that is removed on maturation.

Belongs to the conotoxin A superfamily. Expressed by the venom duct.

It is found in the secreted. Alpha-conotoxins act on postsynaptic membranes, they bind to the nicotinic acetylcholine receptors (nAChR) and thus inhibit them. Has possibly a distinct nAChR binding mode from other alpha-conotoxins, due to a different three residue motif (lacks the Ser-Xaa-Pro motif). This is Alpha-conotoxin-like Ca1.2 from Conus caracteristicus (Characteristic cone).